The primary structure comprises 510 residues: MIWHVQNENFILDSTRIFMKAFHLLLFHGSFIFPECILIFGLILLLMIDSTSDQKDIPWLYFISSTSLVMSITALLFRWREEPMISFSGNFQTNNFNEIFQFLILLCSTLCIPLSVEYIECTEMAITEFLLFVLTATLGGMFLCGANDLITIFVAPECFSLCSYLLSGYTKRDVRSNEATTKYLLMGGASSSILVHGFSWLYGSSGGEIELQEIVNGLINTQMYNSPGISIALIFITVGIGFKLSPAPFHQWTPDVYEGSPTPVVAFLSVTSKVAASASATRIFDIPFYFSSNEWHLLLEILAILSMILGNLIAITQTSMKRMLAYSSIGQIGYVIIGIIVGDSNDGYASMITYMLFYISMNLGTFACIVLFGLRTGTDNIRDYAGLYTKDPFLALSSALCLLSLGGLPPLAGFFGKLYLFWCGWQAGLYFLVSIGLLMSVVSIYYYLKIIKLLMTGRNQEITPHMRNYRRYPLRSNNSIELSMILCVIASTIPGISMNPIIAIAQDTLF.

13 consecutive transmembrane segments (helical) span residues 24–44, 57–77, 99–119, 124–144, 149–169, 183–203, 229–249, 295–315, 323–343, 354–374, 395–415, 418–438, and 484–504; these read LLLF…GLIL, IPWL…ALLF, IFQF…VEYI, MAIT…MFLC, LITI…LSGY, YLLM…WLYG, ISIA…PAPF, WHLL…LIAI, MLAY…IVGD, YMLF…LFGL, ALSS…AGFF, LYLF…IGLL, and MILC…IIAI.

This sequence belongs to the complex I subunit 2 family. As to quaternary structure, NDH is composed of at least 16 different subunits, 5 of which are encoded in the nucleus.

Its subcellular location is the plastid. It is found in the chloroplast thylakoid membrane. It catalyses the reaction a plastoquinone + NADH + (n+1) H(+)(in) = a plastoquinol + NAD(+) + n H(+)(out). The enzyme catalyses a plastoquinone + NADPH + (n+1) H(+)(in) = a plastoquinol + NADP(+) + n H(+)(out). Functionally, NDH shuttles electrons from NAD(P)H:plastoquinone, via FMN and iron-sulfur (Fe-S) centers, to quinones in the photosynthetic chain and possibly in a chloroplast respiratory chain. The immediate electron acceptor for the enzyme in this species is believed to be plastoquinone. Couples the redox reaction to proton translocation, and thus conserves the redox energy in a proton gradient. The polypeptide is NAD(P)H-quinone oxidoreductase subunit 2 A, chloroplastic (Piper cenocladum (Ant piper)).